A 29-amino-acid chain; its full sequence is Cytochrome b6-f complex subunit 8 (29 aa).

The helical transmembrane segment at 3–23 threads the bilayer; sequence IVSIAWAALMVVFTFSLSLVV.

Belongs to the PetN family. In terms of assembly, the 4 large subunits of the cytochrome b6-f complex are cytochrome b6, subunit IV (17 kDa polypeptide, PetD), cytochrome f and the Rieske protein, while the 4 small subunits are PetG, PetL, PetM and PetN. The complex functions as a dimer.

It localises to the plastid. Its subcellular location is the chloroplast thylakoid membrane. Functionally, component of the cytochrome b6-f complex, which mediates electron transfer between photosystem II (PSII) and photosystem I (PSI), cyclic electron flow around PSI, and state transitions. In Angiopteris evecta (Mule's foot fern), this protein is Cytochrome b6-f complex subunit 8.